A 378-amino-acid polypeptide reads, in one-letter code: IDS-type sesquiterpene synthase (378 aa).

Mg(2+) is bound by residues aspartate 120 and aspartate 124. Residues aspartate 120–aspartate 124 carry the DDXXD motif motif.

The protein belongs to the terpene synthase family. The cofactor is Mg(2+). Highly expressed in male epidermal tissue associated with the cuticle of ventral sternites.

It carries out the reaction (2Z,6E)-farnesyl diphosphate = (Z)-alpha-bisabolene + diphosphate. The protein operates within pheromone biosynthesis. In terms of biological role, sesquiterpene alcohol synthase that catalyzes the formation of the pheromone precursor (Z)-alpha-bisabolene from (2Z,6E)-farnesyl diphosphate. This is IDS-type sesquiterpene synthase from Nezara viridula (Southern green stink bug).